The primary structure comprises 143 residues: MSDVEQEQIVEEVVVEEQSGAITIEDALKVVLRTSLVHDGLARGLREASKALSKREAQLCVLCDSVTEESIIKLVEALCNEPEEKIPLIKVSDAKLLGEWAGLCQLDRDGNARKVVGASCVVVKNWGADSDERNILLEHFSQQ.

This sequence belongs to the eukaryotic ribosomal protein eS12 family. As to quaternary structure, component of the small ribosomal subunit. Mature ribosomes consist of a small (40S) and a large (60S) subunit. The 40S subunit contains about 32 different proteins and 1 molecule of RNA (18S). The 60S subunit contains 45 different proteins and 3 molecules of RNA (25S, 5.8S and 5S).

Its subcellular location is the cytoplasm. Component of the ribosome, a large ribonucleoprotein complex responsible for the synthesis of proteins in the cell. The small ribosomal subunit (SSU) binds messenger RNAs (mRNAs) and translates the encoded message by selecting cognate aminoacyl-transfer RNA (tRNA) molecules. The large subunit (LSU) contains the ribosomal catalytic site termed the peptidyl transferase center (PTC), which catalyzes the formation of peptide bonds, thereby polymerizing the amino acids delivered by tRNAs into a polypeptide chain. The nascent polypeptides leave the ribosome through a tunnel in the LSU and interact with protein factors that function in enzymatic processing, targeting, and the membrane insertion of nascent chains at the exit of the ribosomal tunnel. The protein is Small ribosomal subunit protein eS12 (RPS12) of Candida albicans (strain SC5314 / ATCC MYA-2876) (Yeast).